The primary structure comprises 335 residues: Phenylalanine--tRNA ligase alpha subunit (335 aa).

Position 262 (E262) interacts with Mg(2+).

The protein belongs to the class-II aminoacyl-tRNA synthetase family. Phe-tRNA synthetase alpha subunit type 1 subfamily. Tetramer of two alpha and two beta subunits. Mg(2+) is required as a cofactor.

Its subcellular location is the cytoplasm. It carries out the reaction tRNA(Phe) + L-phenylalanine + ATP = L-phenylalanyl-tRNA(Phe) + AMP + diphosphate + H(+). This Prochlorococcus marinus subsp. pastoris (strain CCMP1986 / NIES-2087 / MED4) protein is Phenylalanine--tRNA ligase alpha subunit.